We begin with the raw amino-acid sequence, 856 residues long: Wall-associated receptor kinase 17 (856 aa).

The N-terminal stretch at 1–42 (MPSRSPACRPRGRNRRSAADAVARPLALALILVSTLPRAAHS) is a signal peptide. Residues Asn171 and Asn234 are each glycosylated (N-linked (GlcNAc...) asparagine). Residues 297–334 (FEKLCKYGTCVDAPTGAGYLCKCPSGYDGNPYVSDGCQ) form the EGF-like 1 domain. Disulfide bonds link Cys301–Cys306, Cys319–Cys333, Cys339–Cys353, Cys347–Cys362, and Cys364–Cys379. In terms of domain architecture, EGF-like 2; calcium-binding spans 335–380 (DINECRNYNSNNCTYQNLCNNTLGGYTCSCPENNIGDGYRTGTGCN). 2 N-linked (GlcNAc...) asparagine glycosylation sites follow: Asn346 and Asn354. N-linked (GlcNAc...) asparagine glycosylation is present at Asn380. The helical transmembrane segment at 452–470 (VLGVSLVLMVTTTTAASCY) threads the bilayer. A Protein kinase domain is found at 527–805 (YSESRILGRG…VLQELRRSFT (279 aa)). ATP contacts are provided by residues 533–541 (LGRGGQGTV) and Lys555. The Proton acceptor role is filled by Asp652. Residues 816–844 (SIQENSEQEEKHLHESRSIPSLQSSEVST) are disordered. A compositionally biased stretch (basic and acidic residues) spans 823–832 (QEEKHLHESR). Positions 833-844 (SIPSLQSSEVST) are enriched in polar residues.

This sequence belongs to the protein kinase superfamily. Ser/Thr protein kinase family. As to quaternary structure, interacts with WAK17 isoform 2; the interaction is direct. Interacts with LRR5; the interaction is direct. In terms of assembly, interacts with WAK17 isoform 1; the interaction is direct. (Microbial infection) Interacts with G.zeae CFEM1 (via CFEM domain); the interaction is direct. Interacts with G.zeae CFEMN1; the interaction is direct. Interacts with G.zeae CFEM5; the interaction is direct. Mn(2+) is required as a cofactor. It depends on Mg(2+) as a cofactor.

It is found in the cell membrane. It carries out the reaction L-seryl-[protein] + ATP = O-phospho-L-seryl-[protein] + ADP + H(+). The enzyme catalyses L-threonyl-[protein] + ATP = O-phospho-L-threonyl-[protein] + ADP + H(+). Functionally, kinase that contributes to activation of the hypersensitive response, a form of programmed cell death, upon fungal infection. Secreted protein that contributes to activation of the hypersensitive response, a form of programmed cell death, upon fungal infection. May sense the presence of fungal material and relay the signal to WAK17 isoform 1. In Zea mays (Maize), this protein is Wall-associated receptor kinase 17.